A 258-amino-acid polypeptide reads, in one-letter code: MEVTQEELRHEILHTWEAAREAWVIHLEIAGINLSINKPVWFLWLGAAITFLFMYVGARTLRDRPGAYQVLVEELFRFGRDMFGGQINEEGRKWFPYSLTLFIFLLVLNIIGLFPNSYPVTSNISFTATLALFTFVLTQYEGVRRNGLVTYLKSWAPADLPAKPLMYPIMWFLHLIQEFTKPLTLALRLYANILAGHLIIFVFLSLILYFGLPTAFVSVPFAVVFYAFEIFVAVIQAYIFAILTQVYIELAMFAEEAH.

5 helical membrane-spanning segments follow: residues 38 to 58 (KPVW…YVGA), 94 to 114 (WFPY…IGLF), 118 to 138 (YPVT…FVLT), 193 to 213 (ILAG…FGLP), and 215 to 235 (AFVS…VAVI).

Belongs to the ATPase A chain family. As to quaternary structure, F-type ATPases have 2 components, CF(1) - the catalytic core - and CF(0) - the membrane proton channel. CF(1) has five subunits: alpha(3), beta(3), gamma(1), delta(1), epsilon(1). CF(0) has three main subunits: a(1), b(2) and c(9-12). The alpha and beta chains form an alternating ring which encloses part of the gamma chain. CF(1) is attached to CF(0) by a central stalk formed by the gamma and epsilon chains, while a peripheral stalk is formed by the delta and b chains.

The protein localises to the cell membrane. In terms of biological role, key component of the proton channel; it plays a direct role in the translocation of protons across the membrane. The protein is ATP synthase subunit a of Rubrobacter xylanophilus (strain DSM 9941 / JCM 11954 / NBRC 16129 / PRD-1).